A 149-amino-acid chain; its full sequence is 3-dehydroquinate dehydratase (149 aa).

Tyrosine 24 (proton acceptor) is an active-site residue. Residues asparagine 76, histidine 82, and aspartate 89 each coordinate substrate. The active-site Proton donor is histidine 102. Substrate contacts are provided by residues 103–104 and arginine 113; that span reads LS.

The protein belongs to the type-II 3-dehydroquinase family. As to quaternary structure, homododecamer.

It carries out the reaction 3-dehydroquinate = 3-dehydroshikimate + H2O. The protein operates within metabolic intermediate biosynthesis; chorismate biosynthesis; chorismate from D-erythrose 4-phosphate and phosphoenolpyruvate: step 3/7. Its function is as follows. Catalyzes a trans-dehydration via an enolate intermediate. This is 3-dehydroquinate dehydratase from Acinetobacter baylyi (strain ATCC 33305 / BD413 / ADP1).